The sequence spans 347 residues: 4-hydroxy-2-oxovalerate aldolase 4 (347 aa).

One can recognise a Pyruvate carboxyltransferase domain in the interval 9–259 (ITIVDTTLRD…DTGVDLFPLI (251 aa)). Substrate-binding positions include 17–18 (RD), serine 171, and histidine 198. Position 18 (aspartate 18) interacts with Mn(2+). Residues histidine 198 and histidine 200 each coordinate Mn(2+). Tyrosine 289 is a binding site for substrate.

It belongs to the 4-hydroxy-2-oxovalerate aldolase family.

It catalyses the reaction (S)-4-hydroxy-2-oxopentanoate = acetaldehyde + pyruvate. This chain is 4-hydroxy-2-oxovalerate aldolase 4, found in Rhodococcus opacus (strain B4).